Consider the following 207-residue polypeptide: Probable GTP-binding protein EngB (207 aa).

The 173-residue stretch at 22 to 194 folds into the EngB-type G domain; that stretch reads DLPEVAFAGR…LQRLDVALSD (173 aa). GTP contacts are provided by residues 30–37, 57–61, 75–78, 142–145, and 173–175; these read GRSNVGKS, GRTQL, DLPG, TKVD, and FSA. Residues Ser-37 and Thr-59 each contribute to the Mg(2+) site.

It belongs to the TRAFAC class TrmE-Era-EngA-EngB-Septin-like GTPase superfamily. EngB GTPase family. Mg(2+) is required as a cofactor.

Necessary for normal cell division and for the maintenance of normal septation. The chain is Probable GTP-binding protein EngB from Syntrophotalea carbinolica (strain DSM 2380 / NBRC 103641 / GraBd1) (Pelobacter carbinolicus).